The sequence spans 92 residues: UPF0473 protein Cbei_1107 (92 aa).

It belongs to the UPF0473 family.

The polypeptide is UPF0473 protein Cbei_1107 (Clostridium beijerinckii (strain ATCC 51743 / NCIMB 8052) (Clostridium acetobutylicum)).